A 346-amino-acid polypeptide reads, in one-letter code: MKLKTMTMEWTGDELILIDQRKIPLVEEYVSCKSYKEVAVAIKDMVVRGAPAIGASAAFGYVLGAREMFVEDFNAFVKKMEEVKEVLANTRPTAVNLFWALNRMEDSLKKYGKIEGILEYLEEEAMNIAKEDIEVNKAIGRYGAELLKDGDTVLTHCNAGALATVDYGTALGVIRAAVEQGKKIKVFADETRPYLQGARLTAWELMKDGIDVTLISDNMSGWSMKLGKINAVIVGADRVAANGDVANKIGTYMVAVLAKRHGIPFYVAAPTSTIDLNTKTGKDIPIEERKHTEVTHCGGKQIAPDGVKVFNPAFDVTDAELVTAIITEKGVVYPPYEENLKKLFEE.

Substrate-binding positions include 48 to 50 (RGA), arginine 91, and glutamine 196. The active-site Proton donor is aspartate 237. 247-248 (NK) is a substrate binding site.

Belongs to the eIF-2B alpha/beta/delta subunits family. MtnA subfamily.

It carries out the reaction 5-(methylsulfanyl)-alpha-D-ribose 1-phosphate = 5-(methylsulfanyl)-D-ribulose 1-phosphate. Its pathway is amino-acid biosynthesis; L-methionine biosynthesis via salvage pathway; L-methionine from S-methyl-5-thio-alpha-D-ribose 1-phosphate: step 1/6. In terms of biological role, catalyzes the interconversion of methylthioribose-1-phosphate (MTR-1-P) into methylthioribulose-1-phosphate (MTRu-1-P). The protein is Methylthioribose-1-phosphate isomerase of Thermosipho africanus (strain TCF52B).